A 93-amino-acid polypeptide reads, in one-letter code: Ferredoxin-2 (93 aa).

The 90-residue stretch at 2–91 (YKVTLKTPDG…DVVIETHKED (90 aa)) folds into the 2Fe-2S ferredoxin-type domain. Cysteine 37, cysteine 42, cysteine 45, and cysteine 75 together coordinate [2Fe-2S] cluster.

This sequence belongs to the 2Fe2S plant-type ferredoxin family. The cofactor is [2Fe-2S] cluster.

Its subcellular location is the plastid. The protein localises to the chloroplast. Functionally, ferredoxins are iron-sulfur proteins that transfer electrons in a wide variety of metabolic reactions. The sequence is that of Ferredoxin-2 from Equisetum telmateia (Great horsetail).